Consider the following 901-residue polypeptide: Protein translocase subunit SecA (901 aa).

ATP is bound by residues Gln-87, 105–109 (GEGKT), and Asp-512. The interval 859–901 (HQDDDSAAAAALAAQTGERKVGRNDPCPCGSGKKYKQCHGRLQ) is disordered. 4 residues coordinate Zn(2+): Cys-885, Cys-887, Cys-896, and His-897. The segment covering 891–901 (KKYKQCHGRLQ) has biased composition (basic residues).

It belongs to the SecA family. In terms of assembly, monomer and homodimer. Part of the essential Sec protein translocation apparatus which comprises SecA, SecYEG and auxiliary proteins SecDF-YajC and YidC. Zn(2+) is required as a cofactor.

It is found in the cell inner membrane. The protein localises to the cytoplasm. It carries out the reaction ATP + H2O + cellular proteinSide 1 = ADP + phosphate + cellular proteinSide 2.. In terms of biological role, part of the Sec protein translocase complex. Interacts with the SecYEG preprotein conducting channel. Has a central role in coupling the hydrolysis of ATP to the transfer of proteins into and across the cell membrane, serving both as a receptor for the preprotein-SecB complex and as an ATP-driven molecular motor driving the stepwise translocation of polypeptide chains across the membrane. This chain is Protein translocase subunit SecA, found in Escherichia coli O6:K15:H31 (strain 536 / UPEC).